The sequence spans 584 residues: Proline--tRNA ligase (584 aa).

It belongs to the class-II aminoacyl-tRNA synthetase family. ProS type 1 subfamily. Homodimer.

The protein resides in the cytoplasm. The enzyme catalyses tRNA(Pro) + L-proline + ATP = L-prolyl-tRNA(Pro) + AMP + diphosphate. Functionally, catalyzes the attachment of proline to tRNA(Pro) in a two-step reaction: proline is first activated by ATP to form Pro-AMP and then transferred to the acceptor end of tRNA(Pro). As ProRS can inadvertently accommodate and process non-cognate amino acids such as alanine and cysteine, to avoid such errors it has two additional distinct editing activities against alanine. One activity is designated as 'pretransfer' editing and involves the tRNA(Pro)-independent hydrolysis of activated Ala-AMP. The other activity is designated 'posttransfer' editing and involves deacylation of mischarged Ala-tRNA(Pro). The misacylated Cys-tRNA(Pro) is not edited by ProRS. This is Proline--tRNA ligase from Mycobacterium sp. (strain KMS).